Here is a 70-residue protein sequence, read N- to C-terminus: DNA gyrase inhibitor YacG (70 aa).

Cys-20, Cys-23, Cys-35, and Cys-39 together coordinate Zn(2+).

Belongs to the DNA gyrase inhibitor YacG family. In terms of assembly, interacts with GyrB. Zn(2+) serves as cofactor.

Functionally, inhibits all the catalytic activities of DNA gyrase by preventing its interaction with DNA. Acts by binding directly to the C-terminal domain of GyrB, which probably disrupts DNA binding by the gyrase. This is DNA gyrase inhibitor YacG from Rhizobium etli (strain ATCC 51251 / DSM 11541 / JCM 21823 / NBRC 15573 / CFN 42).